Consider the following 1353-residue polypeptide: Inhibitor of Bruton tyrosine kinase (1353 aa).

ANK repeat units follow at residues 51–80 (FGRN…DLLV) and 85–114 (SGWT…SLYI). RCC1 repeat units lie at residues 141–194 (PTDV…FLSQ), 195–246 (KGQV…VLTE), and 248–301 (GCVY…LWTR). 2 consecutive BTB domains span residues 564–644 (HDVT…DFLT) and 768–836 (CDVT…VVIK). The stretch at 806–835 (SSCAALEMPIHSDILKVILDYLYTDEAVVI) is one ANK 3 repeat. The disordered stretch occupies residues 970-1001 (HSETMFKKAKTKAKKKPRKRSDSSGGYNLSDI). Residues 976–988 (KKAKTKAKKKPRK) are compositionally biased toward basic residues. Phosphoserine is present on Ser-990. The segment covering 992 to 1001 (SSGGYNLSDI) has biased composition (polar residues). Phosphoserine is present on residues Ser-1004, Ser-1030, Ser-1033, Ser-1039, Ser-1045, Ser-1054, Ser-1083, Ser-1111, Ser-1113, and Ser-1116. Residues 1134–1155 (KCGATPKSHLGKTVSHGVKLSQ) are disordered.

In terms of assembly, interacts with the PH domain of BTK. Isoform 2 does not interact with BTK. In terms of tissue distribution, expressed in DeFew, HEK293T, HeLa and in Jurkat, MC3 and NB4 lymphoid cells (at protein level). Isoform 1 is the predominant isoform expressed in all examined tissues and cell lines. Highly expressed in hemopoietic tissues (fetal liver, spleen, lymph node, thymus, peripheral blood leukocytes and bone marrow). Weakly or not expressed in other tissues.

Its subcellular location is the cytoplasm. It localises to the membrane. The protein localises to the nucleus. Acts as an inhibitor of BTK tyrosine kinase activity, thereby playing a role in B-cell development. Down-regulates BTK kinase activity, leading to interference with BTK-mediated calcium mobilization and NF-kappa-B-driven transcription. The polypeptide is Inhibitor of Bruton tyrosine kinase (IBTK) (Homo sapiens (Human)).